Reading from the N-terminus, the 718-residue chain is Protein Hook homolog 3 (718 aa).

Met1 bears the N-acetylmethionine mark. Residues 1–164 (MFNVESVERV…QELMSKESPV (164 aa)) are sufficient for interaction with microtubules. Phosphoserine is present on Ser6. Residues 10–126 (VELCESLLTW…RMLQLILGCA (117 aa)) enclose the Calponin-homology (CH) domain. Coiled-coil stretches lie at residues 168–433 (HDAY…VQAQ) and 462–663 (EIRE…MEEK). Ser238 is modified (phosphoserine). Positions 450-671 (SSDSLAAEIV…EKYIVSAWYN (222 aa)) are sufficient for interaction with IIGP1. The tract at residues 553-718 (EKLHEANNEL…PGHVQPATAR (166 aa)) is required for association with Golgi. Residues 682–718 (EDRLASTGSGQSFLARQRQATSTRRSYPGHVQPATAR) form a disordered region. Positions 687–706 (STGSGQSFLARQRQATSTRR) are enriched in polar residues. Phosphoserine is present on residues Ser693 and Ser707.

Belongs to the hook family. As to quaternary structure, self-associates. Component of the FTS/Hook/FHIP complex (FHF complex), composed of AKTIP/FTS, FHIP1B, and one or more members of the Hook family of proteins HOOK1, HOOK2, and HOOK3. May interact directly with AKTIP/FTS, HOOK1 and HOOK2. Associates with several subunits of the homotypic vesicular sorting complex (the HOPS complex) including VPS16 and VPS41; these interactions may be indirect. Interacts with IIGP1. Interacts with MSR1, and this association is stimulated by ligand binding to MSR1. Interacts with microtubules. Part of a tripartite complex with dynein and dynactin, acts an adapter linking the dynein motor complex and dynactin. Interacts with dynein intermediate chain and dynactin (DCTN1). Interacts with CCDC181. Interacts with LRGUK. In terms of assembly, (Microbial infection) Interacts with Salmonella typhimurium spiC. As to expression, expressed in brain, cerebellum, heart, intestine, kidney, liver, lung, skeletal muscle, spleen and stomach (at protein level).

It localises to the cytoplasm. Its subcellular location is the cytoskeleton. The protein resides in the golgi apparatus. Acts as an adapter protein linking the dynein motor complex to various cargos and converts dynein from a non-processive to a highly processive motor in the presence of dynactin. Facilitates the interaction between dynein and dynactin and activates dynein processivity (the ability to move along a microtubule for a long distance without falling off the track). Predominantly recruits 2 dyneins, which increases both the force and speed of the microtubule motor. Component of the FTS/Hook/FHIP complex (FHF complex). The FHF complex may function to promote vesicle trafficking and/or fusion via the homotypic vesicular protein sorting complex (the HOPS complex). May regulate clearance of endocytosed receptors such as MSR1. Participates in defining the architecture and localization of the Golgi complex. FHF complex promotes the distribution of AP-4 complex to the perinuclear area of the cell. In terms of biological role, (Microbial infection) Serves as a target for the spiC protein from Salmonella typhimurium, which inactivates it, leading to a strong alteration in cellular trafficking. This is Protein Hook homolog 3 (Hook3) from Mus musculus (Mouse).